A 259-amino-acid polypeptide reads, in one-letter code: Zinc import ATP-binding protein ZnuC (259 aa).

The 217-residue stretch at 22-238 (VEARGLTVRR…PEYRALFGAH (217 aa)) folds into the ABC transporter domain. 54-61 (GPNGSGKS) contacts ATP.

Belongs to the ABC transporter superfamily. Zinc importer (TC 3.A.1.15.5) family. In terms of assembly, the complex is composed of two ATP-binding proteins (ZnuC), two transmembrane proteins (ZnuB) and a solute-binding protein (ZnuA).

It is found in the cell inner membrane. The catalysed reaction is Zn(2+)(out) + ATP(in) + H2O(in) = Zn(2+)(in) + ADP(in) + phosphate(in) + H(+)(in). Part of the ABC transporter complex ZnuABC involved in zinc import. Responsible for energy coupling to the transport system. The protein is Zinc import ATP-binding protein ZnuC of Alkalilimnicola ehrlichii (strain ATCC BAA-1101 / DSM 17681 / MLHE-1).